The following is an 826-amino-acid chain: Lon protease (826 aa).

Basic and acidic residues predominate over residues 1-20 (MSEEELNNRDTESKQEHDEN). The tract at residues 1–27 (MSEEELNNRDTESKQEHDENNSNFEAG) is disordered. Residues 33-231 (LPVLPLREVI…KVHALLEKEL (199 aa)) form the Lon N-terminal domain. An ATP-binding site is contributed by 384-391 (GPPGVGKT). One can recognise a Lon proteolytic domain in the interval 620–801 (ENLVGMTTGL…SEALTFTLAE (182 aa)). Residues Ser707 and Lys750 contribute to the active site.

It belongs to the peptidase S16 family. In terms of assembly, homohexamer. Organized in a ring with a central cavity.

Its subcellular location is the cytoplasm. It catalyses the reaction Hydrolysis of proteins in presence of ATP.. In terms of biological role, ATP-dependent serine protease that mediates the selective degradation of mutant and abnormal proteins as well as certain short-lived regulatory proteins. Required for cellular homeostasis and for survival from DNA damage and developmental changes induced by stress. Degrades polypeptides processively to yield small peptide fragments that are 5 to 10 amino acids long. Binds to DNA in a double-stranded, site-specific manner. The polypeptide is Lon protease (Neorickettsia sennetsu (strain ATCC VR-367 / Miyayama) (Ehrlichia sennetsu)).